We begin with the raw amino-acid sequence, 222 residues long: Kunitz trypsin inhibitor 3 (222 aa).

An N-terminal signal peptide occupies residues 1 to 23 (MEKLTLSFITLTVLSAIFTAASA). Residue Asn-65 is glycosylated (N-linked (GlcNAc...) asparagine). 2 cysteine pairs are disulfide-bonded: Cys-72–Cys-119 and Cys-165–Cys-173. A glycan (N-linked (GlcNAc...) asparagine) is linked at Asn-175.

Belongs to the protease inhibitor I3 (leguminous Kunitz-type inhibitor) family.

Exhibits Kunitz trypsin protease inhibitor activity. This Arabidopsis thaliana (Mouse-ear cress) protein is Kunitz trypsin inhibitor 3.